Consider the following 585-residue polypeptide: PiggyBac transposable element-derived protein 4 (585 aa).

Residues 1-73 are disordered; it reads MSNPRKRSIP…STSSDSGRSM (73 aa). The span at 25–40 shows a compositional bias: acidic residues; the sequence is DSFDESDFSEIDDSDN. Over residues 47-61 the composition is skewed to basic and acidic residues; that stretch reads EADKIRPLSHLESDG. Over residues 62 to 72 the composition is skewed to low complexity; that stretch reads KSSTSSDSGRS.

This chain is PiggyBac transposable element-derived protein 4 (PGBD4), found in Homo sapiens (Human).